Here is a 178-residue protein sequence, read N- to C-terminus: Adenine phosphoribosyltransferase (178 aa).

It belongs to the purine/pyrimidine phosphoribosyltransferase family. As to quaternary structure, homodimer.

The protein resides in the cytoplasm. It catalyses the reaction AMP + diphosphate = 5-phospho-alpha-D-ribose 1-diphosphate + adenine. It functions in the pathway purine metabolism; AMP biosynthesis via salvage pathway; AMP from adenine: step 1/1. Catalyzes a salvage reaction resulting in the formation of AMP, that is energically less costly than de novo synthesis. This Erythrobacter litoralis (strain HTCC2594) protein is Adenine phosphoribosyltransferase.